The primary structure comprises 419 residues: UDP-N-acetylmuramoylalanine--D-glutamate ligase (419 aa).

An ATP-binding site is contributed by 109–115 (GSAGKTT).

This sequence belongs to the MurCDEF family.

The protein localises to the cytoplasm. It carries out the reaction UDP-N-acetyl-alpha-D-muramoyl-L-alanine + D-glutamate + ATP = UDP-N-acetyl-alpha-D-muramoyl-L-alanyl-D-glutamate + ADP + phosphate + H(+). It functions in the pathway cell wall biogenesis; peptidoglycan biosynthesis. Functionally, cell wall formation. Catalyzes the addition of glutamate to the nucleotide precursor UDP-N-acetylmuramoyl-L-alanine (UMA). The polypeptide is UDP-N-acetylmuramoylalanine--D-glutamate ligase (Chlamydia caviae (strain ATCC VR-813 / DSM 19441 / 03DC25 / GPIC) (Chlamydophila caviae)).